The chain runs to 354 residues: Glycine betaine/proline betaine transport system permease protein ProW (354 aa).

The segment at 1–28 (MADQTNPWDTAQVADTTTQTADAWGTPA) is disordered. The Cytoplasmic segment spans residues 1-99 (MADQTNPWDT…VDYILNGFQQ (99 aa)). Positions 9-23 (DTAQVADTTTQTADA) are enriched in low complexity. Residues 100–120 (LLLGMPAPVAIILFALIAWQV) form a helical membrane-spanning segment. Residue S121 is a topological domain, periplasmic. A helical transmembrane segment spans residues 122 to 142 (GVGMGIATLISLIAIGAIGAW). Topologically, residues 143 to 148 (SQAMIT) are cytoplasmic. The region spanning 145–324 (AMITLALVLT…ILAIILDRLT (180 aa)) is the ABC transmembrane type-1 domain. Residues 149 to 169 (LALVLTALLFCVVIGLPMGIW) traverse the membrane as a helical segment. The Periplasmic segment spans residues 170-198 (LARSPRAAKIVRPLLDAMQTTPAFVYLVP). A helical membrane pass occupies residues 199–219 (IVMLFGIGNVPGVVVTIIFAL). Residues 220 to 270 (PPIVRLTILGINQVPADLIEASRSFGASPRQMLFKVQLPLAMPTIMAGVNQ) are Cytoplasmic-facing. Residues 271 to 291 (TLMLALSMVVIASMIAVGGLG) traverse the membrane as a helical segment. At 292-300 (QMVLRGIGR) the chain is on the periplasmic side. Residues 301–321 (LDMGLATVGGVGIVILAIILD) traverse the membrane as a helical segment. Residues 322–354 (RLTQAVGRDSRSRGNRRWYTTGPVGLITRPFVK) lie on the Cytoplasmic side of the membrane.

This sequence belongs to the binding-protein-dependent transport system permease family. CysTW subfamily. As to quaternary structure, the complex is composed of two ATP-binding proteins (ProV), two transmembrane proteins (ProW) and a solute-binding protein (ProX).

It localises to the cell inner membrane. In terms of biological role, part of the ProU ABC transporter complex involved in glycine betaine and proline betaine uptake. Probably responsible for the translocation of the substrate across the membrane. This is Glycine betaine/proline betaine transport system permease protein ProW from Salmonella typhimurium (strain LT2 / SGSC1412 / ATCC 700720).